The primary structure comprises 331 residues: Ketol-acid reductoisomerase (NADP(+)) (331 aa).

In terms of domain architecture, KARI N-terminal Rossmann spans I2–T182. NADP(+) contacts are provided by residues Y25–Q28, R48, and S51. Residue H108 is part of the active site. G134 serves as a coordination point for NADP(+). In terms of domain architecture, KARI C-terminal knotted spans T183 to I329. D191, E195, E227, and E231 together coordinate Mg(2+). S252 serves as a coordination point for substrate.

Belongs to the ketol-acid reductoisomerase family. Mg(2+) is required as a cofactor.

It catalyses the reaction (2R)-2,3-dihydroxy-3-methylbutanoate + NADP(+) = (2S)-2-acetolactate + NADPH + H(+). The catalysed reaction is (2R,3R)-2,3-dihydroxy-3-methylpentanoate + NADP(+) = (S)-2-ethyl-2-hydroxy-3-oxobutanoate + NADPH + H(+). It participates in amino-acid biosynthesis; L-isoleucine biosynthesis; L-isoleucine from 2-oxobutanoate: step 2/4. It functions in the pathway amino-acid biosynthesis; L-valine biosynthesis; L-valine from pyruvate: step 2/4. Its function is as follows. Involved in the biosynthesis of branched-chain amino acids (BCAA). Catalyzes an alkyl-migration followed by a ketol-acid reduction of (S)-2-acetolactate (S2AL) to yield (R)-2,3-dihydroxy-isovalerate. In the isomerase reaction, S2AL is rearranged via a Mg-dependent methyl migration to produce 3-hydroxy-3-methyl-2-ketobutyrate (HMKB). In the reductase reaction, this 2-ketoacid undergoes a metal-dependent reduction by NADPH to yield (R)-2,3-dihydroxy-isovalerate. The chain is Ketol-acid reductoisomerase (NADP(+)) from Brachyspira hyodysenteriae (strain ATCC 49526 / WA1).